We begin with the raw amino-acid sequence, 280 residues long: Ribonuclease P protein subunit p38 (280 aa).

N-acetylalanine is present on Ala2. 3 positions are modified to phosphoserine: Ser12, Ser221, and Ser230. The tract at residues 202 to 227 (WLPDRTQGPTDSLETEPSESQDNEIL) is disordered. Residues 214-226 (LETEPSESQDNEI) are compositionally biased toward acidic residues. The segment at 254–280 (QPLKIKKLIPNPSKIRKPPKSKKSISK) is disordered. Over residues 267-280 (KIRKPPKSKKSISK) the composition is skewed to basic residues.

This sequence belongs to the eukaryotic ribosomal protein eL8 family. As to quaternary structure, component of nuclear RNase P and RNase MRP ribonucleoproteins. RNase P consists of a catalytic RNA moiety and about 10 protein subunits; POP1, POP4, POP5, POP7, RPP14, RPP21, RPP25, RPP30, RPP38 and RPP40. Within the RNase P complex, POP1, POP7 and RPP25 form the 'finger' subcomplex, POP5, RPP14, RPP40 and homodimeric RPP30 form the 'palm' subcomplex, and RPP21, POP4 and RPP38 form the 'wrist' subcomplex. All subunits of the RNase P complex interact with the catalytic RNA. Several subunits of RNase P are also part of the RNase MRP complex. RNase MRP consists of a catalytic RNA moiety and about 8 protein subunits; POP1, POP7, RPP25, RPP30, RPP38, RPP40 and possibly also POP4 and POP5.

It localises to the nucleus. Its subcellular location is the nucleolus. Component of ribonuclease P, a ribonucleoprotein complex that generates mature tRNA molecules by cleaving their 5'-ends. Also a component of the MRP ribonuclease complex, which cleaves pre-rRNA sequences. The protein is Ribonuclease P protein subunit p38 (Rpp38) of Mus musculus (Mouse).